The primary structure comprises 325 residues: Tagatose 1,6-diphosphate aldolase (325 aa).

The protein belongs to the aldolase LacD family.

The enzyme catalyses D-tagatofuranose 1,6-bisphosphate = D-glyceraldehyde 3-phosphate + dihydroxyacetone phosphate. The protein operates within carbohydrate metabolism; D-tagatose 6-phosphate degradation; D-glyceraldehyde 3-phosphate and glycerone phosphate from D-tagatose 6-phosphate: step 2/2. This is Tagatose 1,6-diphosphate aldolase from Staphylococcus epidermidis (strain ATCC 12228 / FDA PCI 1200).